A 581-amino-acid polypeptide reads, in one-letter code: Frizzled-8 (581 aa).

An N-terminal signal peptide occupies residues Met-1 to Ala-23. The 121-residue stretch at Lys-24–Tyr-144 folds into the FZ domain. Topologically, residues Lys-24–Trp-239 are extracellular. 5 disulfide bridges follow: Cys-28–Cys-89, Cys-36–Cys-82, Cys-73–Cys-111, Cys-100–Cys-141, and Cys-104–Cys-128. Asn-42 carries an N-linked (GlcNAc...) asparagine glycan. A hexadecanoate-binding site is contributed by Gln-64–Ile-71. The tract at residues Ile-88–Tyr-93 is wnt-binding. The interval Leu-140–Asn-146 is wnt-binding. N-linked (GlcNAc...) asparagine glycosylation occurs at Asn-146. The tract at residues Thr-151 to Ser-189 is disordered. A compositionally biased stretch (pro residues) spans His-157–Arg-166. The helical transmembrane segment at Ile-240–Ile-260 threads the bilayer. Topologically, residues Asp-261–Pro-271 are cytoplasmic. Residues Ile-272–Ala-292 traverse the membrane as a helical segment. Residues Gly-293–Cys-320 are Extracellular-facing. Residues Thr-321 to Leu-341 form a helical membrane-spanning segment. Residues Ser-342–Ser-377 lie on the Cytoplasmic side of the membrane. Residues Ile-378–Gly-398 form a helical membrane-spanning segment. Over Asn-399 to Gly-407 the chain is Extracellular. The helical transmembrane segment at Phe-408–Phe-428 threads the bilayer. At Val-429–Arg-454 the chain is on the cytoplasmic side. The helical transmembrane segment at Ile-455–Tyr-475 threads the bilayer. The Extracellular portion of the chain corresponds to Glu-476–Ala-505. A helical transmembrane segment spans residues Val-506–Trp-526. Residues Ser-527–Val-581 lie on the Cytoplasmic side of the membrane. The Lys-Thr-X-X-X-Trp motif, mediates interaction with the PDZ domain of Dvl family members signature appears at Lys-529 to Trp-534. A PDZ-binding motif is present at residues Ser-579 to Val-581.

The protein belongs to the G-protein coupled receptor Fz/Smo family. Interacts with lypd6 and the interaction is strongly enhanced by wnt3a.

It localises to the membrane. The protein localises to the cell membrane. Its function is as follows. Receptor for Wnt proteins. Most of frizzled receptors are coupled to the beta-catenin canonical signaling pathway, which leads to the activation of disheveled proteins, inhibition of GSK-3 kinase, nuclear accumulation of beta-catenin and activation of Wnt target genes. A second signaling pathway involving PKC and calcium fluxes has been seen for some family members, but it is not yet clear if it represents a distinct pathway or if it can be integrated in the canonical pathway, as PKC seems to be required for Wnt-mediated inactivation of GSK-3 kinase. Both pathways seem to involve interactions with G-proteins. May be involved in transduction and intercellular transmission of polarity information during tissue morphogenesis and/or in differentiated tissues. Activation by Wnt8, Wnt5A or Wnt3A induces expression of beta-catenin target genes. Displays an axis-inducing activity. The chain is Frizzled-8 (fzd8) from Xenopus laevis (African clawed frog).